Reading from the N-terminus, the 330-residue chain is Probable WRKY transcription factor 39 (330 aa).

A DNA-binding region (WRKY) is located at residues 256–322 (KIADIPPDEY…YEGEHNHSRI (67 aa)).

Its subcellular location is the nucleus. In terms of biological role, transcription factor. Interacts specifically with the W box (5'-(T)TGAC[CT]-3'), a frequently occurring elicitor-responsive cis-acting element. The sequence is that of Probable WRKY transcription factor 39 (WRKY39) from Arabidopsis thaliana (Mouse-ear cress).